The sequence spans 259 residues: DNA repair protein RecO (259 aa).

The protein belongs to the RecO family.

Functionally, involved in DNA repair and RecF pathway recombination. This Leuconostoc mesenteroides subsp. mesenteroides (strain ATCC 8293 / DSM 20343 / BCRC 11652 / CCM 1803 / JCM 6124 / NCDO 523 / NBRC 100496 / NCIMB 8023 / NCTC 12954 / NRRL B-1118 / 37Y) protein is DNA repair protein RecO.